A 440-amino-acid polypeptide reads, in one-letter code: Guanine/hypoxanthine permease PbuG (440 aa).

The next 13 helical transmembrane spans lie at 18 to 38, 57 to 77, 81 to 101, 107 to 127, 142 to 162, 175 to 195, 201 to 221, 251 to 271, 291 to 311, 327 to 347, 354 to 374, 388 to 408, and 419 to 439; these read IIGG…NPIT, AVFT…GLIA, IAIA…VLGM, AALS…LTGF, AVGA…SGII, IHSG…ILMV, GVFI…LVPV, MLIV…GTLV, ALLA…STTT, GFAA…SPLL, VTAP…GKIA, MIMM…FIFY, and KEVH…FIFL.

The protein belongs to the nucleobase:cation symporter-2 (NCS2) (TC 2.A.40) family. Azg-like subfamily.

It is found in the cell membrane. Its function is as follows. Involved in the uptake of the purine bases hypoxanthine and guanine. In Bacillus subtilis (strain 168), this protein is Guanine/hypoxanthine permease PbuG (pbuG).